The primary structure comprises 185 residues: MAEFRFIKTSLDGAIIIEPEVYTDERGYFMETFNEAIFQENGLEVRFVQDNESMSVRGVLRGLHFQREKPQGKLVRVIRGEIFDVAVDLRKNSDTYGEWTGVRLSDENRREFFIPEGFAHGFLALSDECIVNYKCTELYHPEYDSGIPWDDPDIGIDWPLEMVDDLIISEKDRNWKPLRENPVYL.

Substrate-binding positions include arginine 26, glutamate 31, 49 to 51 (QDN), and arginine 61. Catalysis depends on histidine 64, which acts as the Proton acceptor. Substrate contacts are provided by lysine 73 and histidine 120. Tyrosine 133 serves as the catalytic Proton donor. Substrate is bound by residues aspartate 144 and lysine 171.

This sequence belongs to the dTDP-4-dehydrorhamnose 3,5-epimerase family. Homodimer.

The catalysed reaction is dTDP-4-dehydro-6-deoxy-alpha-D-glucose = dTDP-4-dehydro-beta-L-rhamnose. It participates in carbohydrate biosynthesis; dTDP-L-rhamnose biosynthesis. Functionally, catalyzes the epimerization of the C3' and C5'positions of dTDP-6-deoxy-D-xylo-4-hexulose, forming dTDP-6-deoxy-L-lyxo-4-hexulose. The polypeptide is dTDP-4-dehydrorhamnose 3,5-epimerase (rmlC) (Methanothermobacter thermautotrophicus (strain ATCC 29096 / DSM 1053 / JCM 10044 / NBRC 100330 / Delta H) (Methanobacterium thermoautotrophicum)).